Here is a 348-residue protein sequence, read N- to C-terminus: NADH-ubiquinone oxidoreductase chain 2 (348 aa).

9 helical membrane-spanning segments follow: residues 1–21, 60–80, 96–116, 149–169, 177–194, 198–220, 238–258, 273–293, and 328–348; these read MSPYITASLLFGLLLGPTITA, FLTQATAAAMLLFASTTNAWL, TLIILALALKIGLAPLHTWLP, NPTLLVILGVLSTLIGGWGGL, ILAYSSIAHLGWMILILQ, TLTLLTLMLYLIMTSSAFLTFIL, ILTSLLPLVLLSLGGLPPLTG, DLAPTATLAALSALLSLYFYL, and MAASSILLLPMTPGILTLFNI.

This sequence belongs to the complex I subunit 2 family.

It localises to the mitochondrion inner membrane. The catalysed reaction is a ubiquinone + NADH + 5 H(+)(in) = a ubiquinol + NAD(+) + 4 H(+)(out). Its function is as follows. Core subunit of the mitochondrial membrane respiratory chain NADH dehydrogenase (Complex I) that is believed to belong to the minimal assembly required for catalysis. Complex I functions in the transfer of electrons from NADH to the respiratory chain. The immediate electron acceptor for the enzyme is believed to be ubiquinone. The protein is NADH-ubiquinone oxidoreductase chain 2 (MT-ND2) of Tetraodon nigroviridis (Spotted green pufferfish).